A 672-amino-acid chain; its full sequence is Glycine--tRNA ligase beta subunit (672 aa).

It belongs to the class-II aminoacyl-tRNA synthetase family. As to quaternary structure, tetramer of two alpha and two beta subunits.

The protein localises to the cytoplasm. The enzyme catalyses tRNA(Gly) + glycine + ATP = glycyl-tRNA(Gly) + AMP + diphosphate. The sequence is that of Glycine--tRNA ligase beta subunit from Thermotoga sp. (strain RQ2).